We begin with the raw amino-acid sequence, 337 residues long: MRVLGIETSCDETGIAIYDDERGLLANQLYSQVKLHADYGGVVPELASRDHVRKTVPLIQAALKEAGLMASDIDAVAYTAGPGLVGALLVGATVGRSLAFAWNVPAIPVHHMEGHLLAPMLEDNPPDFPFVALLVSGGHTQLISVTGIGQYELLGESIDDAAGEAFDKTAKLLGLDYPGGPMLSKMALQGTAGRFVFPRPMTDRPGLDFSFSGLKTFAANTIRSNGEDEQTRADIARAFEDAVVDTLMIKCKRALESTGFKRLVMAGGVSANQTLRAKLAEMMQKRCGEVFYARPEFCTDNGAMIAYAGMVRFKAGVTADLGVTVRPRWPLAELPAV.

Fe cation-binding residues include histidine 111 and histidine 115. Residues 134 to 138 (LVSGG), aspartate 167, glycine 180, and asparagine 272 contribute to the substrate site. Residue aspartate 300 coordinates Fe cation.

It belongs to the KAE1 / TsaD family. The cofactor is Fe(2+).

The protein resides in the cytoplasm. It catalyses the reaction L-threonylcarbamoyladenylate + adenosine(37) in tRNA = N(6)-L-threonylcarbamoyladenosine(37) in tRNA + AMP + H(+). Required for the formation of a threonylcarbamoyl group on adenosine at position 37 (t(6)A37) in tRNAs that read codons beginning with adenine. Is involved in the transfer of the threonylcarbamoyl moiety of threonylcarbamoyl-AMP (TC-AMP) to the N6 group of A37, together with TsaE and TsaB. TsaD likely plays a direct catalytic role in this reaction. The sequence is that of tRNA N6-adenosine threonylcarbamoyltransferase from Salmonella arizonae (strain ATCC BAA-731 / CDC346-86 / RSK2980).